Consider the following 414-residue polypeptide: Serine hydroxymethyltransferase (414 aa).

Residues leucine 116 and 120 to 122 each bind (6S)-5,6,7,8-tetrahydrofolate; that span reads GHL. Lysine 224 carries the N6-(pyridoxal phosphate)lysine modification. Residues glutamate 240 and 348 to 350 each bind (6S)-5,6,7,8-tetrahydrofolate; that span reads SPF.

Belongs to the SHMT family. Homodimer. It depends on pyridoxal 5'-phosphate as a cofactor.

It localises to the cytoplasm. It carries out the reaction (6R)-5,10-methylene-5,6,7,8-tetrahydrofolate + glycine + H2O = (6S)-5,6,7,8-tetrahydrofolate + L-serine. It participates in one-carbon metabolism; tetrahydrofolate interconversion. Its pathway is amino-acid biosynthesis; glycine biosynthesis; glycine from L-serine: step 1/1. Catalyzes the reversible interconversion of serine and glycine with tetrahydrofolate (THF) serving as the one-carbon carrier. This reaction serves as the major source of one-carbon groups required for the biosynthesis of purines, thymidylate, methionine, and other important biomolecules. Also exhibits THF-independent aldolase activity toward beta-hydroxyamino acids, producing glycine and aldehydes, via a retro-aldol mechanism. This Campylobacter concisus (strain 13826) protein is Serine hydroxymethyltransferase.